The following is a 71-amino-acid chain: Sec-independent protein translocase protein TatA (71 aa).

Residues 9–29 (LLLILAIVVILFGASRLPALG) form a helical membrane-spanning segment. The segment at 43-71 (FGGEDEKPTASGNGSTPTQSSSDQGSKQA) is disordered. A compositionally biased stretch (polar residues) spans 52–71 (ASGNGSTPTQSSSDQGSKQA).

This sequence belongs to the TatA/E family. In terms of assembly, the Tat system comprises two distinct complexes: a TatABC complex, containing multiple copies of TatA, TatB and TatC subunits, and a separate TatA complex, containing only TatA subunits. Substrates initially bind to the TatABC complex, which probably triggers association of the separate TatA complex to form the active translocon.

The protein resides in the cell inner membrane. Part of the twin-arginine translocation (Tat) system that transports large folded proteins containing a characteristic twin-arginine motif in their signal peptide across membranes. TatA could form the protein-conducting channel of the Tat system. This is Sec-independent protein translocase protein TatA from Anaeromyxobacter dehalogenans (strain 2CP-C).